A 60-amino-acid polypeptide reads, in one-letter code: DNA-binding protein 7c (60 aa).

Positions 37 to 60 (DNGKTGRGAVSEKDAPKELLEKLK) are disordered. The span at 46-60 (VSEKDAPKELLEKLK) shows a compositional bias: basic and acidic residues.

Belongs to the 7 kDa DNA-binding/endoribonuclease P2 family. As to quaternary structure, monomer.

It localises to the cytoplasm. Can constrain negative DNA supercoils. May be involved in maintaining the integrity of the genome at high temperature. This chain is DNA-binding protein 7c, found in Acidianus hospitalis (strain W1).